The following is a 230-amino-acid chain: Urease accessory protein UreG (230 aa).

A disordered region spans residues 1–31 (MPPHFLSADSTGQPHRHADRPKRVRTPGEPL). Basic residues predominate over residues 14 to 25 (PHRHADRPKRVR). 37-44 (GPVGSGKT) serves as a coordination point for GTP.

Belongs to the SIMIBI class G3E GTPase family. UreG subfamily. In terms of assembly, homodimer. UreD, UreF and UreG form a complex that acts as a GTP-hydrolysis-dependent molecular chaperone, activating the urease apoprotein by helping to assemble the nickel containing metallocenter of UreC. The UreE protein probably delivers the nickel.

Its subcellular location is the cytoplasm. Its function is as follows. Facilitates the functional incorporation of the urease nickel metallocenter. This process requires GTP hydrolysis, probably effectuated by UreG. In Mycobacterium sp. (strain JLS), this protein is Urease accessory protein UreG.